A 353-amino-acid polypeptide reads, in one-letter code: Phosphoribosylformylglycinamidine cyclo-ligase (353 aa).

The protein belongs to the AIR synthase family.

The protein resides in the cytoplasm. It catalyses the reaction 2-formamido-N(1)-(5-O-phospho-beta-D-ribosyl)acetamidine + ATP = 5-amino-1-(5-phospho-beta-D-ribosyl)imidazole + ADP + phosphate + H(+). The protein operates within purine metabolism; IMP biosynthesis via de novo pathway; 5-amino-1-(5-phospho-D-ribosyl)imidazole from N(2)-formyl-N(1)-(5-phospho-D-ribosyl)glycinamide: step 2/2. The sequence is that of Phosphoribosylformylglycinamidine cyclo-ligase from Ralstonia nicotianae (strain ATCC BAA-1114 / GMI1000) (Ralstonia solanacearum).